We begin with the raw amino-acid sequence, 203 residues long: Orotate phosphoribosyltransferase (203 aa).

5-phospho-alpha-D-ribose 1-diphosphate-binding positions include Arg-94, Lys-98, His-100, and Glu-120 to Ser-128. An orotate-binding site is contributed by Ser-124.

This sequence belongs to the purine/pyrimidine phosphoribosyltransferase family. PyrE subfamily. As to quaternary structure, homodimer. The cofactor is Mg(2+).

It carries out the reaction orotidine 5'-phosphate + diphosphate = orotate + 5-phospho-alpha-D-ribose 1-diphosphate. It functions in the pathway pyrimidine metabolism; UMP biosynthesis via de novo pathway; UMP from orotate: step 1/2. In terms of biological role, catalyzes the transfer of a ribosyl phosphate group from 5-phosphoribose 1-diphosphate to orotate, leading to the formation of orotidine monophosphate (OMP). In Staphylococcus saprophyticus subsp. saprophyticus (strain ATCC 15305 / DSM 20229 / NCIMB 8711 / NCTC 7292 / S-41), this protein is Orotate phosphoribosyltransferase.